The primary structure comprises 734 residues: 1,4-alpha-glucan branching enzyme GlgB (734 aa).

Catalysis depends on Asp414, which acts as the Nucleophile. Glu467 acts as the Proton donor in catalysis.

Belongs to the glycosyl hydrolase 13 family. GlgB subfamily. In terms of assembly, monomer.

It catalyses the reaction Transfers a segment of a (1-&gt;4)-alpha-D-glucan chain to a primary hydroxy group in a similar glucan chain.. It functions in the pathway glycan biosynthesis; glycogen biosynthesis. Its function is as follows. Catalyzes the formation of the alpha-1,6-glucosidic linkages in glycogen by scission of a 1,4-alpha-linked oligosaccharide from growing alpha-1,4-glucan chains and the subsequent attachment of the oligosaccharide to the alpha-1,6 position. This is 1,4-alpha-glucan branching enzyme GlgB from Myxococcus xanthus (strain DK1622).